We begin with the raw amino-acid sequence, 236 residues long: Small ribosomal subunit protein uS2c (236 aa).

This sequence belongs to the universal ribosomal protein uS2 family.

It is found in the plastid. The protein localises to the chloroplast. The chain is Small ribosomal subunit protein uS2c (rps2) from Guizotia abyssinica (Niger).